The chain runs to 260 residues: Dolichol-phosphate mannosyltransferase subunit 1 (260 aa).

Residues 1–25 (MASTGASRSLAASPRPPQGRSSRQD) form a disordered region. Position 2 is an N-acetylalanine (Ala2). A phosphoserine mark is found at Ser3 and Ser9. Positions 32, 34, 36, 63, 65, 118, 119, 120, 147, 234, and 240 each coordinate GDP-alpha-D-mannose. Asp120 serves as a coordination point for Mg(2+). Position 120 (Asp120) interacts with Mn(2+).

It belongs to the glycosyltransferase 2 family. As to quaternary structure, component of the dolichol-phosphate mannose (DPM) synthase complex composed of DPM1, DPM2 and DPM3; within the complex, directly interacts with DPM3. This interaction may stabilize DPM1. The cofactor is Mg(2+). Mn(2+) serves as cofactor. Requires Ca(2+) as cofactor.

It localises to the endoplasmic reticulum. The enzyme catalyses a di-trans,poly-cis-dolichyl phosphate + GDP-alpha-D-mannose = a di-trans,poly-cis-dolichyl beta-D-mannosyl phosphate + GDP. Its pathway is protein modification; protein glycosylation. Transfers mannose from GDP-mannose to dolichol monophosphate to form dolichol phosphate mannose (Dol-P-Man) which is the mannosyl donor in pathways leading to N-glycosylation, glycosyl phosphatidylinositol membrane anchoring, and O-mannosylation of proteins; catalytic subunit of the dolichol-phosphate mannose (DPM) synthase complex. The chain is Dolichol-phosphate mannosyltransferase subunit 1 (Dpm1) from Mus musculus (Mouse).